Consider the following 293-residue polypeptide: Shikimate dehydrogenase (NADP(+)) (293 aa).

Residues 26–28 and T73 contribute to the shikimate site; that span reads SKS. K77 acts as the Proton acceptor in catalysis. D89 contacts NADP(+). Positions 98 and 113 each coordinate shikimate. NADP(+) is bound by residues 137-141, 161-166, and I231; these read GAGGA and NRTKQR. Y233 lines the shikimate pocket. G254 contributes to the NADP(+) binding site.

Belongs to the shikimate dehydrogenase family. Homodimer.

The enzyme catalyses shikimate + NADP(+) = 3-dehydroshikimate + NADPH + H(+). It participates in metabolic intermediate biosynthesis; chorismate biosynthesis; chorismate from D-erythrose 4-phosphate and phosphoenolpyruvate: step 4/7. Its function is as follows. Involved in the biosynthesis of the chorismate, which leads to the biosynthesis of aromatic amino acids. Catalyzes the reversible NADPH linked reduction of 3-dehydroshikimate (DHSA) to yield shikimate (SA). The protein is Shikimate dehydrogenase (NADP(+)) of Bartonella henselae (strain ATCC 49882 / DSM 28221 / CCUG 30454 / Houston 1) (Rochalimaea henselae).